A 447-amino-acid polypeptide reads, in one-letter code: Peptide chain release factor 1, mitochondrial (447 aa).

The N-terminal 63 residues, 1 to 63, are a transit peptide targeting the mitochondrion; sequence MNRRHLFAWL…LLNKNCSRRY (63 aa). The tract at residues 299-363 is GGQ domain; it reads PKDLRIDTFR…LRARLYQQII (65 aa). Residues 313–315 carry the GGQ motif; that stretch reads GGQ. N5-methylglutamine is present on Gln-315.

The protein belongs to the prokaryotic/mitochondrial release factor family. Post-translationally, methylation of glutamine in the GGQ triplet by HEMK1 is conserved from bacteria to mammals.

It localises to the mitochondrion. Functionally, mitochondrial peptide chain release factor that directs the termination of translation in response to the peptide chain non-canonical stop codons AGG and AGA. Non-canonical termination codons AGG and AGA are found at the end of MT-CO1/COX1 and MT-ND6/ND6 open reading frames, respectively. Recognizes non-canonical stop codons via a network of interactions between the codon, MTRF1 and the ribosomal RNA (rRNA): in contrast to other translation release factors, which identify the codon in the A-site via direct interactions of amino acid side chains with the bases, MTRF1 repositions the first 2 bases of the stop codon to use an intricate network of interactions that includes residues of the release factor, the rRNA of the small ribosomal subunit, as well as neighboring bases of the mRNA. The chain is Peptide chain release factor 1, mitochondrial (MTRF1) from Bos taurus (Bovine).